The sequence spans 259 residues: Hydroxyethylthiazole kinase (259 aa).

Residue methionine 37 participates in substrate binding. ATP contacts are provided by arginine 113 and threonine 158. Glycine 185 is a substrate binding site.

It belongs to the Thz kinase family. The cofactor is Mg(2+).

It catalyses the reaction 5-(2-hydroxyethyl)-4-methylthiazole + ATP = 4-methyl-5-(2-phosphooxyethyl)-thiazole + ADP + H(+). The protein operates within cofactor biosynthesis; thiamine diphosphate biosynthesis; 4-methyl-5-(2-phosphoethyl)-thiazole from 5-(2-hydroxyethyl)-4-methylthiazole: step 1/1. Functionally, catalyzes the phosphorylation of the hydroxyl group of 4-methyl-5-beta-hydroxyethylthiazole (THZ). In Helicobacter pylori (strain ATCC 700392 / 26695) (Campylobacter pylori), this protein is Hydroxyethylthiazole kinase.